A 324-amino-acid chain; its full sequence is NADH-ubiquinone oxidoreductase chain 1 (324 aa).

Transmembrane regions (helical) follow at residues 10–30 (MIMTLSYMIPILIAVAFLTLV), 76–96 (FLFILTPILALLLALTIWTPL), 107–127 (LGLLFLLAMSSLTVYSLLWSG), 143–163 (VAQTISYEVTLAIILLSTIML), 178–198 (PMYLIFSSWPLTMMWYISTLA), 229–249 (LFFLAEYANIMLMNTLTITLF), 260–280 (ELFSITLATKVLLLSSSFLWI), and 300–320 (FLPLTLAMCLWHTSMPISYAG).

This sequence belongs to the complex I subunit 1 family.

The protein resides in the mitochondrion inner membrane. The enzyme catalyses a ubiquinone + NADH + 5 H(+)(in) = a ubiquinol + NAD(+) + 4 H(+)(out). In terms of biological role, core subunit of the mitochondrial membrane respiratory chain NADH dehydrogenase (Complex I) that is believed to belong to the minimal assembly required for catalysis. Complex I functions in the transfer of electrons from NADH to the respiratory chain. The immediate electron acceptor for the enzyme is believed to be ubiquinone. The chain is NADH-ubiquinone oxidoreductase chain 1 (MT-ND1) from Coturnix japonica (Japanese quail).